A 71-amino-acid chain; its full sequence is MATKKTFEERLQELETIVSKLESGEVPLEEAIAEFQKGMILSKDLQKTLQNAEKTLVKVMQADGSEIEIED.

Belongs to the XseB family. As to quaternary structure, heterooligomer composed of large and small subunits.

The protein resides in the cytoplasm. It carries out the reaction Exonucleolytic cleavage in either 5'- to 3'- or 3'- to 5'-direction to yield nucleoside 5'-phosphates.. In terms of biological role, bidirectionally degrades single-stranded DNA into large acid-insoluble oligonucleotides, which are then degraded further into small acid-soluble oligonucleotides. The protein is Exodeoxyribonuclease 7 small subunit of Streptococcus uberis (strain ATCC BAA-854 / 0140J).